A 346-amino-acid polypeptide reads, in one-letter code: Holliday junction branch migration complex subunit RuvB (346 aa).

Residues 1–183 are large ATPase domain (RuvB-L); sequence MTEQRIIASS…FGIVQRLEFY (183 aa). ATP is bound by residues Ile-22, Arg-23, Gly-64, Lys-67, Thr-68, Thr-69, 130-132, Arg-173, Tyr-183, and Arg-220; that span reads EDF. Thr-68 is a Mg(2+) binding site. The interval 184 to 254 is small ATPAse domain (RuvB-S); that stretch reads SPQELTRIVS…VAQAAMQMLK (71 aa). Residues 257 to 346 are head domain (RuvB-H); sequence PEGFDELDRR…PGIGEPGDLF (90 aa). Positions 293, 312, and 317 each coordinate DNA.

The protein belongs to the RuvB family. In terms of assembly, homohexamer. Forms an RuvA(8)-RuvB(12)-Holliday junction (HJ) complex. HJ DNA is sandwiched between 2 RuvA tetramers; dsDNA enters through RuvA and exits via RuvB. An RuvB hexamer assembles on each DNA strand where it exits the tetramer. Each RuvB hexamer is contacted by two RuvA subunits (via domain III) on 2 adjacent RuvB subunits; this complex drives branch migration. In the full resolvosome a probable DNA-RuvA(4)-RuvB(12)-RuvC(2) complex forms which resolves the HJ.

The protein resides in the cytoplasm. It carries out the reaction ATP + H2O = ADP + phosphate + H(+). In terms of biological role, the RuvA-RuvB-RuvC complex processes Holliday junction (HJ) DNA during genetic recombination and DNA repair, while the RuvA-RuvB complex plays an important role in the rescue of blocked DNA replication forks via replication fork reversal (RFR). RuvA specifically binds to HJ cruciform DNA, conferring on it an open structure. The RuvB hexamer acts as an ATP-dependent pump, pulling dsDNA into and through the RuvAB complex. RuvB forms 2 homohexamers on either side of HJ DNA bound by 1 or 2 RuvA tetramers; 4 subunits per hexamer contact DNA at a time. Coordinated motions by a converter formed by DNA-disengaged RuvB subunits stimulates ATP hydrolysis and nucleotide exchange. Immobilization of the converter enables RuvB to convert the ATP-contained energy into a lever motion, pulling 2 nucleotides of DNA out of the RuvA tetramer per ATP hydrolyzed, thus driving DNA branch migration. The RuvB motors rotate together with the DNA substrate, which together with the progressing nucleotide cycle form the mechanistic basis for DNA recombination by continuous HJ branch migration. Branch migration allows RuvC to scan DNA until it finds its consensus sequence, where it cleaves and resolves cruciform DNA. The sequence is that of Holliday junction branch migration complex subunit RuvB from Xanthomonas euvesicatoria pv. vesicatoria (strain 85-10) (Xanthomonas campestris pv. vesicatoria).